The sequence spans 215 residues: Orotate phosphoribosyltransferase (215 aa).

Lys26 serves as a coordination point for 5-phospho-alpha-D-ribose 1-diphosphate. Residue 34–35 participates in orotate binding; that stretch reads FF. 5-phospho-alpha-D-ribose 1-diphosphate is bound by residues 72–73, Arg99, Lys100, Lys103, His105, and 124–132; these read YK and DDVITAGTA. Residues Thr128 and Arg156 each coordinate orotate.

This sequence belongs to the purine/pyrimidine phosphoribosyltransferase family. PyrE subfamily. In terms of assembly, homodimer. It depends on Mg(2+) as a cofactor.

It catalyses the reaction orotidine 5'-phosphate + diphosphate = orotate + 5-phospho-alpha-D-ribose 1-diphosphate. It functions in the pathway pyrimidine metabolism; UMP biosynthesis via de novo pathway; UMP from orotate: step 1/2. In terms of biological role, catalyzes the transfer of a ribosyl phosphate group from 5-phosphoribose 1-diphosphate to orotate, leading to the formation of orotidine monophosphate (OMP). The chain is Orotate phosphoribosyltransferase from Yersinia pseudotuberculosis serotype O:1b (strain IP 31758).